We begin with the raw amino-acid sequence, 282 residues long: ESX-1 secretion-associated protein EspG1 (282 aa).

Belongs to the EspG family. Interacts specifically with ESX-1-dependent PE/PPE proteins.

The protein localises to the cytoplasm. Functionally, part of the ESX-1 / type VII specialized secretion system (T7SS), which exports several proteins including EsxA and EsxB. Specific chaperone for cognate PE/PPE proteins, plays an important role in preventing aggregation of PE/PPE dimers. Also plays a role in DNA conjugation, in at least recipient strain. The protein is ESX-1 secretion-associated protein EspG1 of Mycolicibacterium smegmatis (strain ATCC 700084 / mc(2)155) (Mycobacterium smegmatis).